Reading from the N-terminus, the 193-residue chain is Major structural subunit of bundle-forming pilus (193 aa).

Positions 1–13 (MVSKIMNKKYEKG) are cleaved as a propeptide — leader sequence. The residue at position 14 (L14) is an N-methylleucine. A helical membrane pass occupies residues 14-35 (LSLIESAMVLALAATVTAGVMF). An intrachain disulfide couples C129 to C179.

The protein belongs to the N-Me-Phe pilin family. 10 to 100 laterally aligned filaments or bundle-forming pili coalesce into rope-like bundles. These form linkages between the bacteria within the enteropathogenic E.coli (EPEC) microcolonies that are attached to epithelial cells.

Its subcellular location is the fimbrium. The protein resides in the membrane. Its function is as follows. Major component of type IV bundle-forming pili (BFP) that plays a role in adherence to host cells and virulence. The sequence is that of Major structural subunit of bundle-forming pilus (bfpA) from Escherichia coli O127:H6 (strain E2348/69 / EPEC).